The sequence spans 220 residues: Guanylate kinase (220 aa).

The Guanylate kinase-like domain occupies 14–194 (GLMVVISSPS…SYAAIKSIIN (181 aa)). Residue 21 to 28 (SPSGAGKS) coordinates ATP.

This sequence belongs to the guanylate kinase family.

It is found in the cytoplasm. The enzyme catalyses GMP + ATP = GDP + ADP. In terms of biological role, essential for recycling GMP and indirectly, cGMP. This chain is Guanylate kinase, found in Brucella abortus (strain 2308).